The chain runs to 240 residues: Probable transcriptional regulatory protein Hac_0344 (240 aa).

The protein belongs to the TACO1 family.

The protein resides in the cytoplasm. In Helicobacter acinonychis (strain Sheeba), this protein is Probable transcriptional regulatory protein Hac_0344.